Here is a 275-residue protein sequence, read N- to C-terminus: MENISKCMERGTTVGTMMVSERFKDQVQIPNTDDNFPEGPPSTKSGVMFTKEDVEYLIGMPIIDFSYYKTAFSYNAIVEGEATYERMEFVGDSVLGFIIARYLYDNFPGKDEGFLSRLRTKFVSGKFLSSIALRMGLHNYVIMHQKGLYRGWNTNPRILEDVFEALMGAIYFDLGINAAKQFFMTTLAKYADMQSLMLDTNYKDRLLKHTRKVELPRPEFVSVFEKGGANPSFIVDVVINGQKISTGTGKSRKDAEQNASKIALHTMGVPEEFIH.

The RNase III domain maps to lysine 51–glycine 175. In terms of domain architecture, DRBM spans asparagine 201–valine 269.

This sequence belongs to the ribonuclease III family.

This chain is Putative protein A464R, found in Chlorella (PBCV-1).